A 115-amino-acid polypeptide reads, in one-letter code: Protein translation factor SUI1 homolog (115 aa).

It belongs to the SUI1 family.

Its function is as follows. Probably involved in translation. In Sporobolus stapfianus (Ressurection grass), this protein is Protein translation factor SUI1 homolog.